A 229-amino-acid chain; its full sequence is Large ribosomal subunit protein uL1c (229 aa).

Belongs to the universal ribosomal protein uL1 family. In terms of assembly, part of the 50S ribosomal subunit.

It is found in the plastid. Its subcellular location is the chloroplast. Its function is as follows. Binds directly to 23S rRNA. Might be involved in E site tRNA release (Potential). This Pyropia yezoensis (Susabi-nori) protein is Large ribosomal subunit protein uL1c (rpl1).